The sequence spans 384 residues: 8-amino-7-oxononanoate synthase (384 aa).

Position 21 (R21) interacts with substrate. A pyridoxal 5'-phosphate-binding site is contributed by 108–109; it reads GF. H133 contacts substrate. 3 residues coordinate pyridoxal 5'-phosphate: S179, H207, and T233. K236 is subject to N6-(pyridoxal phosphate)lysine. T352 contributes to the substrate binding site.

This sequence belongs to the class-II pyridoxal-phosphate-dependent aminotransferase family. BioF subfamily. Homodimer. Pyridoxal 5'-phosphate serves as cofactor.

The catalysed reaction is 6-carboxyhexanoyl-[ACP] + L-alanine + H(+) = (8S)-8-amino-7-oxononanoate + holo-[ACP] + CO2. It participates in cofactor biosynthesis; biotin biosynthesis. Catalyzes the decarboxylative condensation of pimeloyl-[acyl-carrier protein] and L-alanine to produce 8-amino-7-oxononanoate (AON), [acyl-carrier protein], and carbon dioxide. This is 8-amino-7-oxononanoate synthase from Shigella boydii serotype 18 (strain CDC 3083-94 / BS512).